A 201-amino-acid chain; its full sequence is Prostamide/prostaglandin F synthase (201 aa).

The protein belongs to the peroxiredoxin-like PRXL2 family. Prostamide/prostaglandin F synthase subfamily.

The protein localises to the cytoplasm. Its subcellular location is the cytosol. It carries out the reaction prostaglandin H2 + [thioredoxin]-dithiol = prostaglandin F2alpha + [thioredoxin]-disulfide. The catalysed reaction is prostamide F2alpha + [thioredoxin]-disulfide = prostamide H2 + [thioredoxin]-dithiol. In terms of biological role, catalyzes the reduction of prostaglandin-ethanolamide H(2) (prostamide H(2)) to prostamide F(2alpha) with NADPH as proton donor. Also able to reduce prostaglandin H(2) to prostaglandin F(2alpha). This is Prostamide/prostaglandin F synthase (prxl2b) from Xenopus laevis (African clawed frog).